The chain runs to 281 residues: uncharacterized protein (281 aa).

Residues 5 to 27 form a helical membrane-spanning segment; the sequence is AYVTVIYGNNIYLTGALVLGYTL.

It localises to the membrane. This is an uncharacterized protein from Acanthamoeba polyphaga mimivirus (APMV).